A 120-amino-acid chain; its full sequence is UPF0344 protein lin2366 (120 aa).

A run of 4 helical transmembrane segments spans residues 3–23, 33–53, 62–82, and 92–112; these read GYVHLISWVAIVVLTVTALLI, MLQMINRVFYILVILSGIMMV, ILAIFKILMGIIVIGVVEMLL, and GMFLMIFIIVVVITVSLGFYL.

Belongs to the UPF0344 family.

It is found in the cell membrane. The chain is UPF0344 protein lin2366 from Listeria innocua serovar 6a (strain ATCC BAA-680 / CLIP 11262).